The primary structure comprises 1176 residues: Carbamoyl phosphate synthase arginine-specific large chain (1176 aa).

The N-terminal 11 residues, 1-11 (MLRSISIASRA), are a transit peptide targeting the mitochondrion. Positions 70-465 (SRSPDVKKVL…SLQKAIRQVD (396 aa)) are carboxyphosphate synthetic domain. ATP contacts are provided by Arg197, Arg237, Gly243, Gly244, Lys273, Leu275, Glu280, Gly306, Thr307, His308, Gln348, and Glu362. Positions 201–391 (VQALNEIDIP…LAYTAAKIAL (191 aa)) constitute an ATP-grasp 1 domain. Positions 348, 362, and 364 each coordinate Mg(2+). Mn(2+) contacts are provided by Gln348, Glu362, and Asn364. The segment at 466–610 (PNFAGFEAYW…YTSYNATTHD (145 aa)) is oligomerization domain. The interval 611–997 (VKFDNGTMVL…AYWAALLSVN (387 aa)) is carbamoyl phosphate synthetic domain. The ATP-grasp 2 domain occupies 734–931 (SSILDSIGVD…FIDTASAAIM (198 aa)). Positions 770, 809, 811, 816, 841, 842, 843, 844, 884, and 902 each coordinate ATP. Mg(2+)-binding residues include Gln884, Glu902, and Asn904. Positions 884, 902, and 904 each coordinate Mn(2+). Positions 998–1137 (GMKLPKANSG…NPIPYSEGFK (140 aa)) are allosteric domain. The MGS-like domain occupies 999-1154 (MKLPKANSGI…RDFVGEAATT (156 aa)).

Belongs to the CarB family. As to quaternary structure, heterodimer composed of 2 chains; the small (or glutamine) chain promotes the hydrolysis of glutamine to ammonia, which is used by the large (or ammonia) chain to synthesize carbamoyl phosphate. Mg(2+) is required as a cofactor. The cofactor is Mn(2+).

The protein resides in the mitochondrion. It catalyses the reaction hydrogencarbonate + L-glutamine + 2 ATP + H2O = carbamoyl phosphate + L-glutamate + 2 ADP + phosphate + 2 H(+). It carries out the reaction hydrogencarbonate + NH4(+) + 2 ATP = carbamoyl phosphate + 2 ADP + phosphate + 2 H(+). The protein operates within amino-acid biosynthesis; L-arginine biosynthesis; carbamoyl phosphate from bicarbonate: step 1/1. Functionally, large subunit of the arginine-specific carbamoyl phosphate synthase (CPSase). CPSase catalyzes the formation of carbamoyl phosphate from the ammonia moiety of glutamine, hydrogencarbonate, and phosphate donated by ATP, constituting the first step of 2 biosynthetic pathways, one leading to arginine and/or urea and the other to pyrimidine nucleotides. The large subunit (synthetase) binds the substrates ammonia (free or transferred from glutamine from the small subunit), hydrogencarbonate and ATP and carries out an ATP-coupled ligase reaction, activating hydrogencarbonate by forming carboxy phosphate which reacts with ammonia to form carbamoyl phosphate. In Cutaneotrichosporon cutaneum (Yeast), this protein is Carbamoyl phosphate synthase arginine-specific large chain (argA).